We begin with the raw amino-acid sequence, 347 residues long: CCN family member 2 (347 aa).

The N-terminal stretch at 1-24 (MLASVAGPVSLALVLLLCTRPATG) is a signal peptide. The IGFBP N-terminal domain occupies 25-96 (QDCSAQCQCA…NRKIGVCTAK (72 aa)). 6 disulfides stabilise this stretch: cysteine 27–cysteine 52, cysteine 31–cysteine 54, cysteine 33–cysteine 55, cysteine 41–cysteine 58, cysteine 66–cysteine 80, and cysteine 72–cysteine 93. The 67-residue stretch at 99-165 (APCVFGGSVY…GKCCEEWVCD (67 aa)) folds into the VWFC domain. One can recognise a TSP type-1 domain in the interval 196–241 (NCLVQTTEWSACSKTCGMGISTRVTNDNTFCRLEKQSRLCMVRPCE). The heparin-binding stretch occupies residues 245–347 (EENIKKGKKC…YYRKMYGDMA (103 aa)). 5 cysteine pairs are disulfide-bonded: cysteine 254/cysteine 291, cysteine 271/cysteine 305, cysteine 282/cysteine 321, cysteine 285/cysteine 323, and cysteine 290/cysteine 327. Positions 254–328 (CIRTPKIAKP…KTCACHYNCP (75 aa)) constitute a CTCK domain.

The protein belongs to the CCN family. As to quaternary structure, monomer. Interacts with TSKU.

The protein resides in the secreted. It localises to the extracellular space. It is found in the extracellular matrix. Functionally, major connective tissue mitoattractant secreted by vascular endothelial cells. Promotes proliferation and differentiation of chondrocytes. Is involved in the stimulation of osteoblast differentiation and has a critical role in osteogenesis. Mediates heparin- and divalent cation-dependent cell adhesion in many cell types including fibroblasts, myofibroblasts, endothelial and epithelial cells. Enhances fibroblast growth factor-induced DNA synthesis. This Rattus norvegicus (Rat) protein is CCN family member 2.